A 467-amino-acid chain; its full sequence is Argininosuccinate lyase (467 aa).

Belongs to the lyase 1 family. Argininosuccinate lyase subfamily.

The protein localises to the cytoplasm. The catalysed reaction is 2-(N(omega)-L-arginino)succinate = fumarate + L-arginine. It functions in the pathway amino-acid biosynthesis; L-arginine biosynthesis; L-arginine from L-ornithine and carbamoyl phosphate: step 3/3. This Rhizobium etli (strain CIAT 652) protein is Argininosuccinate lyase.